The following is a 952-amino-acid chain: Probable outer membrane protein pmp16 (952 aa).

Residues 1-27 form the signal peptide; sequence MSKTPPKFLFYLGNFTACMFGMTPAVY. The Autotransporter domain maps to 646-952; that stretch reads GDLATTPLWQ…HLQAGSTLKF (307 aa).

Belongs to the PMP outer membrane protein family.

The protein localises to the secreted. It localises to the cell wall. The protein resides in the cell outer membrane. In Chlamydia pneumoniae (Chlamydophila pneumoniae), this protein is Probable outer membrane protein pmp16 (pmp16).